The primary structure comprises 405 residues: Solute carrier family 35 member E2A (405 aa).

A disordered region spans residues 1–22 (MSAAAKSQVPEEAAPGCEEEPK). Helical transmembrane passes span 76 to 96 (LIYL…NKYI), 106 to 126 (MLGA…IFVP), 142 to 162 (FIMT…LGLV), 167 to 187 (VAVS…VIMS), 195 to 215 (TGLL…LCTA), 219 to 241 (SFNI…QNVF), 264 to 284 (AAAV…PVIG), 296 to 316 (IVLL…TAYA), 326 to 346 (FSVA…IVFG), and 347 to 367 (NKIT…VLLY). The disordered stretch occupies residues 380–405 (SLVTATSRNPEDDTEPLVPQDSRQHH).

It belongs to the TPT transporter family. SLC35E subfamily.

The protein resides in the membrane. Functionally, putative transporter. This Mus musculus (Mouse) protein is Solute carrier family 35 member E2A (Slc35e2a).